We begin with the raw amino-acid sequence, 155 residues long: Small ribosomal subunit protein uS8m (155 aa).

It belongs to the universal ribosomal protein uS8 family. In terms of assembly, component of the mitochondrial small ribosomal subunit (mt-SSU). Mature yeast 74S mitochondrial ribosomes consist of a small (37S) and a large (54S) subunit. The 37S small subunit contains a 15S ribosomal RNA (15S mt-rRNA) and 34 different proteins. The 54S large subunit contains a 21S rRNA (21S mt-rRNA) and 46 different proteins.

Its subcellular location is the mitochondrion. In terms of biological role, component of the mitochondrial ribosome (mitoribosome), a dedicated translation machinery responsible for the synthesis of mitochondrial genome-encoded proteins, including at least some of the essential transmembrane subunits of the mitochondrial respiratory chain. The mitoribosomes are attached to the mitochondrial inner membrane and translation products are cotranslationally integrated into the membrane. The chain is Small ribosomal subunit protein uS8m (MRPS8) from Saccharomyces cerevisiae (strain ATCC 204508 / S288c) (Baker's yeast).